The following is a 478-amino-acid chain: Dihydrolipoyl dehydrogenase (478 aa).

FAD contacts are provided by residues E36–C45, K54, and A117. C45 and C50 are oxidised to a cystine. NAD(+) is bound by residues G183 to I187, E206, V239, and A270 to R273. FAD is bound by residues D313 and A321. H445 functions as the Proton acceptor in the catalytic mechanism.

This sequence belongs to the class-I pyridine nucleotide-disulfide oxidoreductase family. Homodimer. The cofactor is FAD.

Its subcellular location is the cytoplasm. The enzyme catalyses N(6)-[(R)-dihydrolipoyl]-L-lysyl-[protein] + NAD(+) = N(6)-[(R)-lipoyl]-L-lysyl-[protein] + NADH + H(+). Lipoamide dehydrogenase is a component of the alpha-ketoacid dehydrogenase complexes. This is Dihydrolipoyl dehydrogenase (lpdA) from Haemophilus influenzae (strain ATCC 51907 / DSM 11121 / KW20 / Rd).